Consider the following 396-residue polypeptide: L-lactate dehydrogenase (396 aa).

Positions 1 to 380 (MIISAASDYR…TQDSLVQGLG (380 aa)) constitute an FMN hydroxy acid dehydrogenase domain. Y24 lines the substrate pocket. FMN is bound by residues S106 and Q127. Y129 is a binding site for substrate. Position 155 (T155) interacts with FMN. Residue R164 participates in substrate binding. K251 contacts FMN. Residue H275 is the Proton acceptor of the active site. R278 provides a ligand contact to substrate. 306-330 (DSGIRNGLDVVRMIALGADTVLLGR) contributes to the FMN binding site.

Belongs to the FMN-dependent alpha-hydroxy acid dehydrogenase family. It depends on FMN as a cofactor.

It localises to the cell inner membrane. The enzyme catalyses (S)-lactate + A = pyruvate + AH2. Its function is as follows. Catalyzes the conversion of L-lactate to pyruvate. Is coupled to the respiratory chain. The polypeptide is L-lactate dehydrogenase (Shigella flexneri serotype 5b (strain 8401)).